Reading from the N-terminus, the 262-residue chain is Phosphonates import ATP-binding protein PhnC (262 aa).

Residues I5–N253 form the ABC transporter domain. G37 to S44 is an ATP binding site.

Belongs to the ABC transporter superfamily. Phosphonates importer (TC 3.A.1.9.1) family. As to quaternary structure, the complex is composed of two ATP-binding proteins (PhnC), two transmembrane proteins (PhnE) and a solute-binding protein (PhnD).

It localises to the cell inner membrane. It catalyses the reaction phosphonate(out) + ATP + H2O = phosphonate(in) + ADP + phosphate + H(+). In terms of biological role, part of the ABC transporter complex PhnCDE involved in phosphonates import. Responsible for energy coupling to the transport system. In Escherichia coli O157:H7, this protein is Phosphonates import ATP-binding protein PhnC.